Reading from the N-terminus, the 83-residue chain is Small ribosomal subunit protein uS17 (83 aa).

The protein belongs to the universal ribosomal protein uS17 family. As to quaternary structure, part of the 30S ribosomal subunit.

In terms of biological role, one of the primary rRNA binding proteins, it binds specifically to the 5'-end of 16S ribosomal RNA. The chain is Small ribosomal subunit protein uS17 from Thermodesulfovibrio yellowstonii (strain ATCC 51303 / DSM 11347 / YP87).